A 110-amino-acid chain; its full sequence is Flagellar hook-basal body complex protein FliE (110 aa).

It belongs to the FliE family.

It localises to the bacterial flagellum basal body. This chain is Flagellar hook-basal body complex protein FliE, found in Pseudomonas putida (strain W619).